The following is a 124-amino-acid chain: MKGTLTRAALAAGGMMVTSAVMAGSLALPTAQSLAGQWEVADSERQCQIEFLANEQSETNGYQLVDRQRCLQSVFAAEVVAGAGPDGIALLQADGSTLAFFSRDGDLYRNQLGAGDALTLKALA.

The first 24 residues, 1–24 (MKGTLTRAALAAGGMMVTSAVMAG), serve as a signal peptide directing secretion. C47 and C70 form a disulfide bridge.

It belongs to the protease inhibitor I38 family. Monomer.

It is found in the periplasm. In terms of biological role, inhibitor of the alkaline protease. Inhibits SMP by formation of a non-covalent complex with a molar ratio of 1:1 and shows a high specificity. This chain is Alkaline proteinase inhibitor (inh), found in Serratia marcescens.